The following is a 180-amino-acid chain: ATP synthase subunit delta (180 aa).

This sequence belongs to the ATPase delta chain family. As to quaternary structure, F-type ATPases have 2 components, F(1) - the catalytic core - and F(0) - the membrane proton channel. F(1) has five subunits: alpha(3), beta(3), gamma(1), delta(1), epsilon(1). CF(0) has four main subunits: a(1), b(1), b'(1) and c(10-14). The alpha and beta chains form an alternating ring which encloses part of the gamma chain. F(1) is attached to F(0) by a central stalk formed by the gamma and epsilon chains, while a peripheral stalk is formed by the delta, b and b' chains.

The protein resides in the cellular thylakoid membrane. In terms of biological role, f(1)F(0) ATP synthase produces ATP from ADP in the presence of a proton or sodium gradient. F-type ATPases consist of two structural domains, F(1) containing the extramembraneous catalytic core and F(0) containing the membrane proton channel, linked together by a central stalk and a peripheral stalk. During catalysis, ATP synthesis in the catalytic domain of F(1) is coupled via a rotary mechanism of the central stalk subunits to proton translocation. Its function is as follows. This protein is part of the stalk that links CF(0) to CF(1). It either transmits conformational changes from CF(0) to CF(1) or is implicated in proton conduction. In Prochlorococcus marinus subsp. pastoris (strain CCMP1986 / NIES-2087 / MED4), this protein is ATP synthase subunit delta.